The chain runs to 932 residues: 2-oxoglutarate dehydrogenase E1 component (932 aa).

The protein belongs to the alpha-ketoglutarate dehydrogenase family. In terms of assembly, homodimer. Part of the 2-oxoglutarate dehydrogenase (OGDH) complex composed of E1 (2-oxoglutarate dehydrogenase), E2 (dihydrolipoamide succinyltransferase) and E3 (dihydrolipoamide dehydrogenase); the complex contains multiple copies of the three enzymatic components (E1, E2 and E3). It depends on thiamine diphosphate as a cofactor.

The enzyme catalyses N(6)-[(R)-lipoyl]-L-lysyl-[protein] + 2-oxoglutarate + H(+) = N(6)-[(R)-S(8)-succinyldihydrolipoyl]-L-lysyl-[protein] + CO2. Functionally, E1 component of the 2-oxoglutarate dehydrogenase (OGDH) complex which catalyzes the decarboxylation of 2-oxoglutarate, the first step in the conversion of 2-oxoglutarate to succinyl-CoA and CO(2). This Staphylococcus aureus (strain USA300) protein is 2-oxoglutarate dehydrogenase E1 component.